The sequence spans 539 residues: Acid-sensing ion channel 4-A (539 aa).

Over 1–68 (MPIEFVCKIK…SGRLGVRQTL (68 aa)) the chain is Cytoplasmic. The helical transmembrane segment at 69–89 (WALAFLVSLALFLYQAAKCAI) threads the bilayer. The Extracellular portion of the chain corresponds to 90–432 (SYLEHPHVTA…EQKKAYDVAG (343 aa)). 2 disulfides stabilise this stretch: cysteine 116-cysteine 200 and cysteine 178-cysteine 185. Asparagine 136, asparagine 165, asparagine 179, asparagine 184, asparagine 206, and asparagine 241 each carry an N-linked (GlcNAc...) asparagine glycan. 5 disulfide bridges follow: cysteine 294–cysteine 369, cysteine 313–cysteine 365, cysteine 317–cysteine 363, cysteine 326–cysteine 347, and cysteine 328–cysteine 340. Asparagine 370 carries N-linked (GlcNAc...) asparagine glycosylation. The chain crosses the membrane as a helical span at residues 433–453 (LLGDIGGQMGLFIGASVLTIL). The short motif at 446–448 (GAS) is the GAS motif; ion selectivity filter element. Over 454–539 (EILDYVYEVI…HHRVSEDFAC (86 aa)) the chain is Cytoplasmic. Residues 474–494 (QRDDKKQTQQQQQASTVATVN) form a disordered region.

It belongs to the amiloride-sensitive sodium channel (TC 1.A.6) family. ASIC4 subfamily. As to quaternary structure, homotrimer. Heterotrimer; with other ASIC proteins producing functional channels. In terms of tissue distribution, expressed in central nervous system.

It is found in the cell membrane. It carries out the reaction Na(+)(in) = Na(+)(out). Its activity is regulated as follows. Inhibited by the diuretic drug amiloride. Its function is as follows. Could form pH-gated trimeric sodium channels and function as a postsynaptic excitatory receptors in the nervous system. The sequence is that of Acid-sensing ion channel 4-A from Danio rerio (Zebrafish).